An 841-amino-acid polypeptide reads, in one-letter code: MRGLNLFQLILALLLSMVAAEDGYDGWLRYAPVSCDLHCQQALPSHVVLLNSTKGSPIETAGRELKAGFQSILSTNLTSRPFQCNSSASILVATLDEYRQRCRDINVPELDPDGFWLQSEGDTVRILGKDARGALYGAYEYLAMVAQRNFSRVAYATSPHAPIRWVNQWDNMDGSIERGYGGASIFFKDGTVVEDMAPVEQYARLLASIRINAIVVNNVNANATLLLPENMKGLSRIADACRPYGVQIGISLNFASPEALGGLNTYDPLDPGVIAWWQNITDSLYTYVPDMAGYLVKADSEGQPGPDTYNRTLSQGANLFARALQPYGGVLMYRAFVYDDNLNESDWKADRAKAAVEYFKDLDGQFEENVVIQIKYGPIDFQVREPTSPLFANLYHTNTAIELEVSQEYLGQQCHLVYLPPLWKTVLDFDLRVDHKPSMVRDIISGQRFNRTLGGWAAVVNVGTNRTWLGSHLAMSNLYAYGRLAWSPTDESEQILEDWTRLTFGQNHHVINTISDMSMTSWPAYENYTGNLGIQTLTDILYTHYGPNPATQDNNGWGQWTRADHDSVGMDRTIWNGTGYTGQYPEEVARVYESLESTPDDLVLWFHHVPWTHRLHSGVTVIQHFYNAHYAGAEAAHGFVRQWESLEGLIDRERYEAMRSRLVYQAGHSIVWRDAINNFYYNMTGIPDVAGRVGHHPWRIEAESMGLDGYQTYTVSPFEAASNTTAIITTSNSTTGTARTSIKAPSGVYDIGVNYYDLYGGQSKWTLSVGDKVVGQWLGDMEHNSLGHTPSIYLGGHSATRITFHGVGIRQGDQLKIVGEANGVEPAPLDYIVLLPPGLVD.

The N-terminal stretch at 1–20 is a signal peptide; sequence MRGLNLFQLILALLLSMVAA. N-linked (GlcNAc...) asparagine glycosylation is found at Asn51, Asn76, Asn85, Asn149, Asn222, Asn279, Asn310, Asn343, Asn450, Asn465, Asn527, Asn576, Asn682, Asn723, and Asn732.

Belongs to the glycosyl hydrolase 67 family.

The protein resides in the secreted. It carries out the reaction an alpha-D-glucuronoside + H2O = D-glucuronate + an alcohol. Its function is as follows. Alpha-glucuronidase involved in the hydrolysis of xylan, a major structural heterogeneous polysaccharide found in plant biomass representing the second most abundant polysaccharide in the biosphere, after cellulose. Releases 4-O-methylglucuronic acid from xylan. The chain is Probable alpha-glucuronidase A (aguA) from Aspergillus niger (strain ATCC MYA-4892 / CBS 513.88 / FGSC A1513).